Reading from the N-terminus, the 450-residue chain is Vimentin beta (450 aa).

The tract at residues M1–E81 is head. Residues S24–T38 show a composition bias toward polar residues. Residues S24 to S56 form a disordered region. The span at S39–S56 shows a compositional bias: low complexity. Positions F82 to L117 are coil 1A. The IF rod domain occupies E89–I397. Residues T118–E139 are linker 1. Positions M140–L231 are coil 1B. Residues Q232 to A254 are linker 12. Residues L255 to E393 form a coil 2 region. The interval E394–E450 is tail.

This sequence belongs to the intermediate filament family. In terms of assembly, homomer. Post-translationally, one of the most prominent phosphoproteins in various cells of mesenchymal origin. Phosphorylation is enhanced during cell division, at which time vimentin filaments are significantly reorganized. In terms of tissue distribution, expressed in low amounts in retina, optic nerve, brain, and spinal cord and in very high amounts in eye lens.

In terms of biological role, vimentins are class-III intermediate filaments found in various non-epithelial cells, especially mesenchymal cells. Vimentin is attached to the nucleus, endoplasmic reticulum, and mitochondria, either laterally or terminally. The protein is Vimentin beta of Carassius auratus (Goldfish).